We begin with the raw amino-acid sequence, 258 residues long: Phosphate import ATP-binding protein PstB 1 (258 aa).

The ABC transporter domain maps to 5 to 247; the sequence is LDLTDVNIYY…EKIFSNPNQK (243 aa). Residue 37–44 coordinates ATP; that stretch reads GPSGCGKT.

Belongs to the ABC transporter superfamily. Phosphate importer (TC 3.A.1.7) family. As to quaternary structure, the complex is composed of two ATP-binding proteins (PstB), two transmembrane proteins (PstC and PstA) and a solute-binding protein (PstS).

Its subcellular location is the cell membrane. It catalyses the reaction phosphate(out) + ATP + H2O = ADP + 2 phosphate(in) + H(+). Part of the ABC transporter complex PstSACB involved in phosphate import. Responsible for energy coupling to the transport system. This Mycobacterium bovis (strain ATCC BAA-935 / AF2122/97) protein is Phosphate import ATP-binding protein PstB 1.